We begin with the raw amino-acid sequence, 377 residues long: Probable multidrug ABC transporter permease YbhS (377 aa).

Residues methionine 1–serine 28 lie on the Cytoplasmic side of the membrane. Residues tryptophan 29–leucine 49 traverse the membrane as a helical segment. Topologically, residues aspartate 50–histidine 181 are periplasmic. The region spanning isoleucine 145–arginine 375 is the ABC transmembrane type-2 domain. The chain crosses the membrane as a helical span at residues phenylalanine 182–leucine 202. Topologically, residues valine 203 to tyrosine 234 are cytoplasmic. Residues tyrosine 235–valine 255 traverse the membrane as a helical segment. Residues proline 256–leucine 261 lie on the Periplasmic side of the membrane. A helical membrane pass occupies residues leucine 262–isoleucine 282. Over serine 283–asparagine 291 the chain is Cytoplasmic. Residues alanine 292–phenylalanine 312 form a helical membrane-spanning segment. The Periplasmic segment spans residues glutamine 313–asparagine 345. A helical transmembrane segment spans residues isoleucine 346–glycine 366. The Cytoplasmic segment spans residues leucine 367–aspartate 377.

Belongs to the ABC-2 integral membrane protein family. The complex is probably composed of two ATP-binding proteins (YbhF) and two transmembrane proteins (YbhR and YbhS).

Its subcellular location is the cell inner membrane. Its function is as follows. Part of the ABC transporter complex YbhFSR that could be involved in efflux of cefoperazone. Probably involved in the translocation of the substrate across the membrane. The protein is Probable multidrug ABC transporter permease YbhS (ybhS) of Escherichia coli O157:H7.